Reading from the N-terminus, the 1214-residue chain is RNA-directed RNA polymerase VP1 (1214 aa).

The RdRp catalytic domain occupies 610-805; it reads APHDVMAPQL…KRTIVGNNVA (196 aa).

It belongs to the reoviridae RNA-directed RNA polymerase family.

The protein resides in the virion. The catalysed reaction is RNA(n) + a ribonucleoside 5'-triphosphate = RNA(n+1) + diphosphate. RNA-directed RNA polymerase that is involved in transcription and genome replication. Following infection, it catalyzes the synthesis of fully conservative plus strands. After core assembly, which consists in recruitment of one capped plus-strand for each genomic segments and polymerase complexes, the polymerase switches mode and catalyzes the synthesis of complementary minus-strands. This is RNA-directed RNA polymerase VP1 (Segment-1) from Banna virus (BAV).